Here is an 89-residue protein sequence, read N- to C-terminus: MAHKKAGGSSRNGRDSKGKRLGIKAFGGERVIPGNIIARQRGTTWHPGLNVGMGTDHTLFAKIEGVVEFHDRANRTFISVRPVAAQAAE.

A disordered region spans residues 1–21 (MAHKKAGGSSRNGRDSKGKRL).

It belongs to the bacterial ribosomal protein bL27 family.

The polypeptide is Large ribosomal subunit protein bL27 (Bradyrhizobium sp. (strain ORS 278)).